A 220-amino-acid chain; its full sequence is tRNA (guanine-N(7)-)-methyltransferase (220 aa).

S-adenosyl-L-methionine-binding residues include glutamate 44, glutamate 69, aspartate 96, and aspartate 118. The active site involves aspartate 118. Position 122 (lysine 122) interacts with substrate. Positions arginine 124–arginine 129 are interaction with RNA. Substrate-binding positions include aspartate 154 and threonine 191–glutamate 194.

Belongs to the class I-like SAM-binding methyltransferase superfamily. TrmB family.

It catalyses the reaction guanosine(46) in tRNA + S-adenosyl-L-methionine = N(7)-methylguanosine(46) in tRNA + S-adenosyl-L-homocysteine. It functions in the pathway tRNA modification; N(7)-methylguanine-tRNA biosynthesis. Its function is as follows. Catalyzes the formation of N(7)-methylguanine at position 46 (m7G46) in tRNA. The sequence is that of tRNA (guanine-N(7)-)-methyltransferase from Halalkalibacterium halodurans (strain ATCC BAA-125 / DSM 18197 / FERM 7344 / JCM 9153 / C-125) (Bacillus halodurans).